The following is a 443-amino-acid chain: Probable glycine dehydrogenase (decarboxylating) subunit 1 (443 aa).

The protein belongs to the GcvP family. N-terminal subunit subfamily. As to quaternary structure, the glycine cleavage system is composed of four proteins: P, T, L and H. In this organism, the P 'protein' is a heterodimer of two subunits.

It catalyses the reaction N(6)-[(R)-lipoyl]-L-lysyl-[glycine-cleavage complex H protein] + glycine + H(+) = N(6)-[(R)-S(8)-aminomethyldihydrolipoyl]-L-lysyl-[glycine-cleavage complex H protein] + CO2. The glycine cleavage system catalyzes the degradation of glycine. The P protein binds the alpha-amino group of glycine through its pyridoxal phosphate cofactor; CO(2) is released and the remaining methylamine moiety is then transferred to the lipoamide cofactor of the H protein. This Nitratidesulfovibrio vulgaris (strain DP4) (Desulfovibrio vulgaris) protein is Probable glycine dehydrogenase (decarboxylating) subunit 1.